The sequence spans 2150 residues: Zinc finger protein sdc-3 (2150 aa).

Residues 443-987 (QEITSPMFAL…DQVENEEPER (545 aa)) are dosage compensation domain 1. 4 disordered regions span residues 874 to 894 (EKEW…EEED), 1261 to 1373 (GSVV…GPEV), 1411 to 1448 (FETS…GPIN), and 1491 to 1670 (EVLQ…SEKL). The span at 1267–1293 (TNQQEENVTSEGPTLQEGSSIPSSSHI) shows a compositional bias: polar residues. Residues 1321-1333 (KKSGKTTRGRPKK) show a composition bias toward basic residues. The segment covering 1347 to 1357 (GQKEEAAHEPE) has biased composition (basic and acidic residues). The segment covering 1504–1524 (SSKKRGRRRKKTPPHIAKARK) has biased composition (basic residues). Residues 1508–1516 (RGRRRKKTP) form a sex determination domain region. Residues 1585-1598 (EDLHETERPGHVGE) are compositionally biased toward basic and acidic residues. Residues 1638–1648 (IQSQAGTNASP) are compositionally biased toward polar residues. 2 consecutive C2H2-type zinc fingers follow at residues 2078–2105 (HKCV…GKLH) and 2117–2141 (DDCQ…NHHH). Positions 2080–2105 (CVQCSIRNQSVYFSSYSLLELHGKLH) are dosage compensation domain 2.

Component of the SDC complex, which consists of sdc-1, sdc-2 and sdc-3. Within the complex, interacts with sdc-1 and sdc-2. Interacts with dpy-21. Sumoylated. Sumoylation is important for assembly of the dosage compensation complex and its robust binding to the X chromosome. Expressed in somatic and in germline tissues in hermaphrodites (XX). In males (XO), only present in embryos younger than the 100-cell stage (at protein level).

The protein resides in the chromosome. It localises to the nucleus. Component of the SDC complex that functions in sex determination and in X chromosome dosage compensation specifically in hermaphrodite (XX) animals. Plays a central role in the recruitment of the condensin I-like dosage compensation complex to the male sex-determining autosomal gene her-1, thereby contributing to its repression and initiating hermaphrodite sexual development. Involved in the recruitment and assembly of the dosage compensation complex and the dosage compensation protein dpy-21 onto the X chromosomes in hermaphrodites, which leads to a reduction of X-linked gene transcription and an equalization of X-linked gene expression between the sexes. The protein is Zinc finger protein sdc-3 (sdc-3) of Caenorhabditis elegans.